Reading from the N-terminus, the 284-residue chain is Diaminopimelate epimerase (284 aa).

Residues N20, Q53, and N73 each coordinate substrate. C82 functions as the Proton donor in the catalytic mechanism. Residues 83–84, N167, N200, and 218–219 each bind substrate; these read GN and ER. Residue C227 is the Proton acceptor of the active site. 228–229 serves as a coordination point for substrate; sequence GS.

Belongs to the diaminopimelate epimerase family. As to quaternary structure, homodimer.

The protein resides in the cytoplasm. The enzyme catalyses (2S,6S)-2,6-diaminopimelate = meso-2,6-diaminopimelate. Its pathway is amino-acid biosynthesis; L-lysine biosynthesis via DAP pathway; DL-2,6-diaminopimelate from LL-2,6-diaminopimelate: step 1/1. In terms of biological role, catalyzes the stereoinversion of LL-2,6-diaminopimelate (L,L-DAP) to meso-diaminopimelate (meso-DAP), a precursor of L-lysine and an essential component of the bacterial peptidoglycan. This is Diaminopimelate epimerase from Xanthomonas campestris pv. campestris (strain ATCC 33913 / DSM 3586 / NCPPB 528 / LMG 568 / P 25).